The sequence spans 529 residues: Tyrosinase (529 aa).

Residues 1 to 18 (MFLFAMGLLLVILQPSTG) form the signal peptide. Residues 19–476 (QFPRVCANTQ…YLKQAHQIWP (458 aa)) are Lumenal, melanosome-facing. 3 N-linked (GlcNAc...) asparagine glycosylation sites follow: asparagine 86, asparagine 111, and asparagine 161. Residues histidine 180, histidine 202, and histidine 211 each contribute to the Cu cation site. Residues asparagine 230 and asparagine 290 are each glycosylated (N-linked (GlcNAc...) asparagine). The segment at 293 to 313 (SEGPILRNPGNNDKSRTPRLP) is disordered. 2 N-linked (GlcNAc...) asparagine glycosylation sites follow: asparagine 337 and asparagine 356. The Cu cation site is built by histidine 363 and histidine 367. Asparagine 371 carries an N-linked (GlcNAc...) asparagine glycan. Histidine 390 serves as a coordination point for Cu cation. A helical transmembrane segment spans residues 477 to 497 (WLVGAAVIGGIITAVLSGLIL). Residues 498–529 (ACRKKRKGTSPEIQPLLTESEDYNNVSYQSHF) lie on the Cytoplasmic side of the membrane.

It belongs to the tyrosinase family. Cu(2+) serves as cofactor.

The protein resides in the melanosome membrane. The protein localises to the melanosome. The catalysed reaction is 2 L-dopa + O2 = 2 L-dopaquinone + 2 H2O. It catalyses the reaction L-tyrosine + O2 = L-dopaquinone + H2O. Functionally, this is a copper-containing oxidase that functions in the formation of pigments such as melanins and other polyphenolic compounds. Catalyzes the initial and rate limiting step in the cascade of reactions leading to melanin production from tyrosine. In addition to hydroxylating tyrosine to DOPA (3,4-dihydroxyphenylalanine), also catalyzes the oxidation of DOPA to DOPA-quinone, and possibly the oxidation of DHI (5,6-dihydroxyindole) to indole-5,6 quinone. This is Tyrosinase (TYR) from Gallus gallus (Chicken).